Consider the following 99-residue polypeptide: Protein dpy-30 homolog (99 aa).

M1 carries the post-translational modification N-acetylmethionine. The tract at residues 1 to 26 is disordered; the sequence is MESEQMLEGQTQVAENPHSEYGLTDS. S19 carries the phosphoserine modification. N6-acetyllysine; alternate is present on K35. Residue K35 forms a Glycyl lysine isopeptide (Lys-Gly) (interchain with G-Cter in SUMO2); alternate linkage.

Belongs to the dpy-30 family. As to quaternary structure, homodimer. Core component of several methyltransferase-containing complexes including MLL1/MLL, MLL2/3 (also named ASCOM complex) and MLL4/WBP7. Each complex is at least composed of ASH2L, RBBP5, WDR5, DPY30, one or more specific histone methyltransferases (KMT2A/MLL1, KMT2D/MLL2, KMT2C/MLL3 and KMT2B/MLL4), and the facultative components MEN1, HCFC1, HCFC2, NCOA6, KDM6A, PAXIP1/PTIP, PAGR1 and alpha- and beta-tubulin PAXIP1/PTIP, PAGR1 and alpha- and beta-tubulin. Interacts with ASH2L. The interaction with ASH2L is direct. Interacts with ARFGEF1. Component of the SET1 complex, at least composed of the catalytic subunit (SETD1A or SETD1B), WDR5, WDR82, RBBP5, ASH2L/ASH2, CXXC1/CFP1, HCFC1 and DPY30.

Its subcellular location is the nucleus. The protein resides in the golgi apparatus. The protein localises to the trans-Golgi network. Its function is as follows. As part of the MLL1/MLL complex, involved in the methylation of histone H3 at 'Lys-4', particularly trimethylation. Histone H3 'Lys-4' methylation represents a specific tag for epigenetic transcriptional activation. May play some role in histone H3 acetylation. In embryonic stem (ES) cells, plays a crucial role in the differentiation potential, particularly along the neural lineage, regulating gene induction and histone H3 'Lys-4' methylation at key developmental loci, including that mediated by retinoic acid. Does not affect ES cell self-renewal. May also play an indirect or direct role in endosomal transport. The chain is Protein dpy-30 homolog (Dpy30) from Mus musculus (Mouse).